We begin with the raw amino-acid sequence, 155 residues long: UPF0251 protein Paes_1249 (155 aa).

This sequence belongs to the UPF0251 family.

The polypeptide is UPF0251 protein Paes_1249 (Prosthecochloris aestuarii (strain DSM 271 / SK 413)).